The primary structure comprises 402 residues: Succinyl-CoA--D-citramalate CoA-transferase (402 aa).

The active-site Nucleophile is D174.

Belongs to the CoA-transferase III family. As to quaternary structure, homodimer.

The enzyme catalyses (3R)-citramalate + succinyl-CoA = (3R)-citramalyl-CoA + succinate. It carries out the reaction (R)-malate + succinyl-CoA = (R)-malyl-CoA + succinate. Involved in the 3-hydroxypropionate cycle used for autotrophic carbon dioxide fixation, and in the glyoxylate assimilation cycle used to regenerate acetyl-CoA and produce pyruvate as universal precursor for biosynthesis. Catalyzes the transfer of CoA moiety from succinyl-CoA to D-citramalate to yield citramalyl-CoA. This is Succinyl-CoA--D-citramalate CoA-transferase from Chloroflexus aurantiacus (strain ATCC 29366 / DSM 635 / J-10-fl).